We begin with the raw amino-acid sequence, 273 residues long: 4-hydroxy-tetrahydrodipicolinate reductase (273 aa).

NAD(+)-binding positions include 11 to 16 and Glu-36; that span reads GAGGRM. Position 37 (Arg-37) interacts with NADP(+). NAD(+)-binding positions include 100 to 102 and 124 to 127; these read GTT and AANY. His-157 serves as the catalytic Proton donor/acceptor. His-158 serves as a coordination point for (S)-2,3,4,5-tetrahydrodipicolinate. Residue Lys-161 is the Proton donor of the active site. Residue 167–168 participates in (S)-2,3,4,5-tetrahydrodipicolinate binding; it reads GT.

It belongs to the DapB family.

Its subcellular location is the cytoplasm. It carries out the reaction (S)-2,3,4,5-tetrahydrodipicolinate + NAD(+) + H2O = (2S,4S)-4-hydroxy-2,3,4,5-tetrahydrodipicolinate + NADH + H(+). It catalyses the reaction (S)-2,3,4,5-tetrahydrodipicolinate + NADP(+) + H2O = (2S,4S)-4-hydroxy-2,3,4,5-tetrahydrodipicolinate + NADPH + H(+). It participates in amino-acid biosynthesis; L-lysine biosynthesis via DAP pathway; (S)-tetrahydrodipicolinate from L-aspartate: step 4/4. Functionally, catalyzes the conversion of 4-hydroxy-tetrahydrodipicolinate (HTPA) to tetrahydrodipicolinate. The protein is 4-hydroxy-tetrahydrodipicolinate reductase of Acinetobacter baylyi (strain ATCC 33305 / BD413 / ADP1).